The sequence spans 537 residues: O-phosphoserine--tRNA(Cys) ligase (537 aa).

Residues 186–188 (HMT), 231–233 (SAS), 273–274 (YY), and Asn-317 contribute to the substrate site.

This sequence belongs to the class-II aminoacyl-tRNA synthetase family. O-phosphoseryl-tRNA(Cys) synthetase subfamily. In terms of assembly, homotetramer. Interacts with SepCysS.

The catalysed reaction is tRNA(Cys) + O-phospho-L-serine + ATP = O-phospho-L-seryl-tRNA(Cys) + AMP + diphosphate. Catalyzes the attachment of O-phosphoserine (Sep) to tRNA(Cys). This Methanococcus maripaludis (strain DSM 14266 / JCM 13030 / NBRC 101832 / S2 / LL) protein is O-phosphoserine--tRNA(Cys) ligase.